We begin with the raw amino-acid sequence, 104 residues long: MIMRPTPDMAMLLAAGLFALGLLGVLVRRNLLFMLMSIEIMLNAAALAFVAAGTRWHAAEGQVMFLMILSLAAAEAAIGLAILLRMHQAGRPTLDADTGNRLKG.

Transmembrane regions (helical) follow at residues 7-27, 31-51, and 63-83; these read PDMA…GVLV, LLFM…AFVA, and VMFL…LAIL.

It belongs to the complex I subunit 4L family. As to quaternary structure, NDH-1 is composed of 14 different subunits. Subunits NuoA, H, J, K, L, M, N constitute the membrane sector of the complex.

It is found in the cell inner membrane. The enzyme catalyses a quinone + NADH + 5 H(+)(in) = a quinol + NAD(+) + 4 H(+)(out). Functionally, NDH-1 shuttles electrons from NADH, via FMN and iron-sulfur (Fe-S) centers, to quinones in the respiratory chain. The immediate electron acceptor for the enzyme in this species is believed to be ubiquinone. Couples the redox reaction to proton translocation (for every two electrons transferred, four hydrogen ions are translocated across the cytoplasmic membrane), and thus conserves the redox energy in a proton gradient. The sequence is that of NADH-quinone oxidoreductase subunit K from Gluconacetobacter diazotrophicus (strain ATCC 49037 / DSM 5601 / CCUG 37298 / CIP 103539 / LMG 7603 / PAl5).